The following is a 185-amino-acid chain: HTH-type transcriptional regulator Hpr (185 aa).

Residues 13-157 (AMIFSQRIAQ…LIAILRNIYG (145 aa)) form the HTH marR-type domain. A DNA-binding region (H-T-H motif) is located at residues 63–86 (ISEIAKFGVMHVSTAFNFSKKLEE).

In terms of assembly, homodimer.

In terms of biological role, negative regulator of protease production and sporulation. This chain is HTH-type transcriptional regulator Hpr, found in Bacillus cytotoxicus (strain DSM 22905 / CIP 110041 / 391-98 / NVH 391-98).